The sequence spans 406 residues: Tyrosine--tRNA ligase (406 aa).

Tyr39 contributes to the L-tyrosine binding site. The short motif at 44–53 (PTADSLHVGH) is the 'HIGH' region element. The L-tyrosine site is built by Tyr172 and Gln176. The short motif at 232 to 236 (KMGKT) is the 'KMSKS' region element. Lys235 is a binding site for ATP. One can recognise an S4 RNA-binding domain in the interval 344–404 (KELLDVLVDR…LGKKKFYNIV (61 aa)).

This sequence belongs to the class-I aminoacyl-tRNA synthetase family. TyrS type 1 subfamily. Homodimer.

It is found in the cytoplasm. The enzyme catalyses tRNA(Tyr) + L-tyrosine + ATP = L-tyrosyl-tRNA(Tyr) + AMP + diphosphate + H(+). Functionally, catalyzes the attachment of tyrosine to tRNA(Tyr) in a two-step reaction: tyrosine is first activated by ATP to form Tyr-AMP and then transferred to the acceptor end of tRNA(Tyr). The protein is Tyrosine--tRNA ligase of Fusobacterium nucleatum subsp. nucleatum (strain ATCC 25586 / DSM 15643 / BCRC 10681 / CIP 101130 / JCM 8532 / KCTC 2640 / LMG 13131 / VPI 4355).